Reading from the N-terminus, the 459-residue chain is Ribulose bisphosphate carboxylase (459 aa).

Asparagine 111 provides a ligand contact to substrate. Lysine 166 functions as the Proton acceptor in the catalytic mechanism. Residue lysine 168 coordinates substrate. The Mg(2+) site is built by lysine 191, aspartate 193, and glutamate 194. N6-carboxylysine is present on lysine 191. Histidine 287 (proton acceptor) is an active-site residue. The substrate site is built by arginine 288, histidine 321, and serine 368.

It belongs to the RuBisCO large chain family. Type II subfamily. As to quaternary structure, homodimer. It depends on Mg(2+) as a cofactor.

The catalysed reaction is 2 (2R)-3-phosphoglycerate + 2 H(+) = D-ribulose 1,5-bisphosphate + CO2 + H2O. It carries out the reaction D-ribulose 1,5-bisphosphate + O2 = 2-phosphoglycolate + (2R)-3-phosphoglycerate + 2 H(+). Its function is as follows. RuBisCO catalyzes two reactions: the carboxylation of D-ribulose 1,5-bisphosphate, the primary event in carbon dioxide fixation, as well as the oxidative fragmentation of the pentose substrate. Both reactions occur simultaneously and in competition at the same active site. The protein is Ribulose bisphosphate carboxylase of Cereibacter sphaeroides (Rhodobacter sphaeroides).